A 321-amino-acid chain; its full sequence is Torsin-2A (321 aa).

The signal sequence occupies residues 1-26 (MAAATRGCRPWGSLLGLLGLVSAAAA). Position 93–100 (93–100 (GWTGTGKS)) interacts with ATP. A glycan (N-linked (GlcNAc...) asparagine) is linked at Asn-149.

This sequence belongs to the ClpA/ClpB family. Torsin subfamily. As to quaternary structure, homohexamer. Interacts with TOR1AIP1. Isoform 1 is expressed ubiquitously, except in cardiac and endothelial tissues.

The protein localises to the endoplasmic reticulum lumen. The polypeptide is Torsin-2A (TOR2A) (Homo sapiens (Human)).